The sequence spans 558 residues: uncharacterized protein (558 aa).

Low complexity predominate over residues 338–354; that stretch reads STSTSTSTSTSSSNDLN. A disordered region spans residues 338 to 380; it reads STSTSTSTSTSSSNDLNLDSDSDDSDSDDSDSDSDSDSDSEID. Positions 355–380 are enriched in acidic residues; that stretch reads LDSDSDDSDSDDSDSDSDSDSDSEID.

It is found in the plastid. This is an uncharacterized protein from Euglena longa (Euglenophycean alga).